Consider the following 82-residue polypeptide: ATP synthase subunit c, chloroplastic (82 aa).

2 helical membrane passes run 7 to 27 (AASVVASGLSVGLAAIGPGIG) and 57 to 77 (LAFMESLTIYGLVVALALLFA).

It belongs to the ATPase C chain family. F-type ATPases have 2 components, F(1) - the catalytic core - and F(0) - the membrane proton channel. F(1) has five subunits: alpha(3), beta(3), gamma(1), delta(1), epsilon(1). F(0) has four main subunits: a(1), b(1), b'(1) and c(10-14). The alpha and beta chains form an alternating ring which encloses part of the gamma chain. F(1) is attached to F(0) by a central stalk formed by the gamma and epsilon chains, while a peripheral stalk is formed by the delta, b and b' chains.

It localises to the plastid. The protein resides in the chloroplast thylakoid membrane. In terms of biological role, f(1)F(0) ATP synthase produces ATP from ADP in the presence of a proton or sodium gradient. F-type ATPases consist of two structural domains, F(1) containing the extramembraneous catalytic core and F(0) containing the membrane proton channel, linked together by a central stalk and a peripheral stalk. During catalysis, ATP synthesis in the catalytic domain of F(1) is coupled via a rotary mechanism of the central stalk subunits to proton translocation. Its function is as follows. Key component of the F(0) channel; it plays a direct role in translocation across the membrane. A homomeric c-ring of between 10-14 subunits forms the central stalk rotor element with the F(1) delta and epsilon subunits. The protein is ATP synthase subunit c, chloroplastic of Rhodomonas salina (Cryptomonas salina).